We begin with the raw amino-acid sequence, 345 residues long: S-adenosylmethionine:tRNA ribosyltransferase-isomerase (345 aa).

The protein belongs to the QueA family. As to quaternary structure, monomer.

Its subcellular location is the cytoplasm. It catalyses the reaction 7-aminomethyl-7-carbaguanosine(34) in tRNA + S-adenosyl-L-methionine = epoxyqueuosine(34) in tRNA + adenine + L-methionine + 2 H(+). Its pathway is tRNA modification; tRNA-queuosine biosynthesis. Functionally, transfers and isomerizes the ribose moiety from AdoMet to the 7-aminomethyl group of 7-deazaguanine (preQ1-tRNA) to give epoxyqueuosine (oQ-tRNA). The chain is S-adenosylmethionine:tRNA ribosyltransferase-isomerase from Helicobacter pylori (strain HPAG1).